Consider the following 487-residue polypeptide: MPN domain-containing protein (487 aa).

The segment at 1–55 (MAAPESLSPGATAEEAPEEDEDDAEAEDPERGTGSGGRSGSLGGSGGGTAGPGMA) is disordered. N-acetylalanine is present on Ala-2. Ser-8 is subject to Phosphoserine. Positions 15–28 (EAPEEDEDDAEAED) are enriched in acidic residues. Positions 33–55 (TGSGGRSGSLGGSGGGTAGPGMA) are enriched in gly residues. The 96-residue stretch at 61–156 (TRRAVTLRVL…KYKAAWLRRH (96 aa)) folds into the RAMA domain. 3 residues coordinate DNA: Ser-113, Ser-115, and Trp-135. A disordered region spans residues 163–217 (ATADESPTSEGEEEELLLEEEEEDVLAGVSSEDKGHRPPGKGSLEPEATPPGKRM). A phosphoserine mark is found at Ser-168 and Ser-171. The span at 172-187 (EGEEEELLLEEEEEDV) shows a compositional bias: acidic residues. One can recognise an MPN domain in the interval 258-393 (VAVSSNVLFL…PESKICPFWV (136 aa)). Zn(2+) contacts are provided by His-335, His-337, and Asp-348. A JAMM motif motif is present at residues 335–348 (HSHPHSPAVPSLQD).

This sequence belongs to the peptidase M67 family. In terms of assembly, monomer. Mainly monomoric, but when binds to dsDNA, forms homotetramer assembled into two homodimers. May interact with histones; this interaction is facilitated by. Degraded following binding to N(6)-methyladenosine methylated DNA (m6A).

Probable protease. Acts as a sensor of N(6)-methyladenosine methylation on DNA (m6A): recognizes and binds m6A DNA, leading to its degradation. Binds only double strand DNA (dsDNA) in a sequence-independent manner. The sequence is that of MPN domain-containing protein from Mus musculus (Mouse).